A 175-amino-acid polypeptide reads, in one-letter code: Probable DNA-directed RNA polymerase subunit delta (175 aa).

In terms of domain architecture, HTH HARE-type spans Met14–Trp81. Residues Leu110–Asp175 form a disordered region.

Belongs to the RpoE family. In terms of assembly, RNAP is composed of a core of 2 alpha, a beta and a beta' subunits. The core is associated with a delta subunit and one of several sigma factors.

Functionally, participates in both the initiation and recycling phases of transcription. In the presence of the delta subunit, RNAP displays an increased specificity of transcription, a decreased affinity for nucleic acids, and an increased efficiency of RNA synthesis because of enhanced recycling. This chain is Probable DNA-directed RNA polymerase subunit delta, found in Bacillus velezensis (strain DSM 23117 / BGSC 10A6 / LMG 26770 / FZB42) (Bacillus amyloliquefaciens subsp. plantarum).